A 448-amino-acid polypeptide reads, in one-letter code: Cytoplasmic tRNA 2-thiolation protein 2 (448 aa).

Belongs to the CTU2/NCS2 family.

The protein localises to the cytoplasm. It participates in tRNA modification; 5-methoxycarbonylmethyl-2-thiouridine-tRNA biosynthesis. Its function is as follows. Plays a central role in 2-thiolation of mcm(5)S(2)U at tRNA wobble positions of tRNA(Lys), tRNA(Glu) and tRNA(Gln). May act by forming a heterodimer with NCS6 that ligates sulfur from thiocarboxylated URM1 onto the uridine of tRNAs at wobble position. Prior mcm(5) tRNA modification by the elongator complex is required for 2-thiolation. May also be involved in protein urmylation. The protein is Cytoplasmic tRNA 2-thiolation protein 2 of Debaryomyces hansenii (strain ATCC 36239 / CBS 767 / BCRC 21394 / JCM 1990 / NBRC 0083 / IGC 2968) (Yeast).